The following is a 179-amino-acid chain: Large ribosomal subunit protein uL5 (179 aa).

This sequence belongs to the universal ribosomal protein uL5 family. Part of the 50S ribosomal subunit; part of the 5S rRNA/L5/L18/L25 subcomplex. Contacts the 5S rRNA and the P site tRNA. Forms a bridge to the 30S subunit in the 70S ribosome.

Functionally, this is one of the proteins that bind and probably mediate the attachment of the 5S RNA into the large ribosomal subunit, where it forms part of the central protuberance. In the 70S ribosome it contacts protein S13 of the 30S subunit (bridge B1b), connecting the 2 subunits; this bridge is implicated in subunit movement. Contacts the P site tRNA; the 5S rRNA and some of its associated proteins might help stabilize positioning of ribosome-bound tRNAs. This is Large ribosomal subunit protein uL5 from Shewanella putrefaciens (strain CN-32 / ATCC BAA-453).